Reading from the N-terminus, the 354-residue chain is Ornithine carbamoyltransferase, catabolic (354 aa).

Residues 67 to 70 (STRT), Q94, R118, and 145 to 148 (HPTQ) contribute to the carbamoyl phosphate site. L-ornithine contacts are provided by residues N177, D241, and 245-246 (SM). Residues 284 to 285 (CL) and R329 contribute to the carbamoyl phosphate site.

Belongs to the aspartate/ornithine carbamoyltransferase superfamily. OTCase family.

Its subcellular location is the cytoplasm. It carries out the reaction carbamoyl phosphate + L-ornithine = L-citrulline + phosphate + H(+). It functions in the pathway amino-acid degradation; L-arginine degradation via ADI pathway; carbamoyl phosphate from L-arginine: step 2/2. In terms of biological role, reversibly catalyzes the transfer of the carbamoyl group from carbamoyl phosphate (CP) to the N(epsilon) atom of ornithine (ORN) to produce L-citrulline. The protein is Ornithine carbamoyltransferase, catabolic (arcB) of Lactococcus lactis subsp. lactis (strain IL1403) (Streptococcus lactis).